A 483-amino-acid polypeptide reads, in one-letter code: tRNA sulfurtransferase (483 aa).

The 105-residue stretch at 61-165 (PLVADALTLI…NDRLLLITER (105 aa)) folds into the THUMP domain. ATP contacts are provided by residues 183–184 (LI), lysine 265, glycine 287, and glutamine 296. Cysteine 344 and cysteine 457 form a disulfide bridge. The region spanning 405–483 (LGSGDVVLDI…GFQNVKVYRP (79 aa)) is the Rhodanese domain. Cysteine 457 serves as the catalytic Cysteine persulfide intermediate.

It belongs to the ThiI family.

The protein localises to the cytoplasm. It catalyses the reaction [ThiI sulfur-carrier protein]-S-sulfanyl-L-cysteine + a uridine in tRNA + 2 reduced [2Fe-2S]-[ferredoxin] + ATP + H(+) = [ThiI sulfur-carrier protein]-L-cysteine + a 4-thiouridine in tRNA + 2 oxidized [2Fe-2S]-[ferredoxin] + AMP + diphosphate. It carries out the reaction [ThiS sulfur-carrier protein]-C-terminal Gly-Gly-AMP + S-sulfanyl-L-cysteinyl-[cysteine desulfurase] + AH2 = [ThiS sulfur-carrier protein]-C-terminal-Gly-aminoethanethioate + L-cysteinyl-[cysteine desulfurase] + A + AMP + 2 H(+). Its pathway is cofactor biosynthesis; thiamine diphosphate biosynthesis. Functionally, catalyzes the ATP-dependent transfer of a sulfur to tRNA to produce 4-thiouridine in position 8 of tRNAs, which functions as a near-UV photosensor. Also catalyzes the transfer of sulfur to the sulfur carrier protein ThiS, forming ThiS-thiocarboxylate. This is a step in the synthesis of thiazole, in the thiamine biosynthesis pathway. The sulfur is donated as persulfide by IscS. The polypeptide is tRNA sulfurtransferase (Sodalis glossinidius (strain morsitans)).